A 199-amino-acid polypeptide reads, in one-letter code: Recombination protein RecR (199 aa).

The segment at 57–72 (CSICFNLTDTDPCAIC) adopts a C4-type zinc-finger fold. The Toprim domain maps to 80–175 (RLLMVVEEAK…KVTRIAHGLP (96 aa)).

The protein belongs to the RecR family.

Its function is as follows. May play a role in DNA repair. It seems to be involved in an RecBC-independent recombinational process of DNA repair. It may act with RecF and RecO. This chain is Recombination protein RecR, found in Carboxydothermus hydrogenoformans (strain ATCC BAA-161 / DSM 6008 / Z-2901).